A 339-amino-acid chain; its full sequence is Annexin A2 (339 aa).

Ser-2 is modified (N-acetylserine). The interval 2-24 (STVHEILCKLSLEGDHSTPPSAY) is S100A10-binding site. A Phosphotyrosine; by SRC modification is found at Tyr-24. Ser-26 is subject to Phosphoserine; by PKC. 2 Annexin repeats span residues 33-104 (FDAE…GLLK) and 105-176 (TPAQ…ALAK). N6-acetyllysine; alternate is present on Lys-49. Lys-49 participates in a covalent cross-link: Glycyl lysine isopeptide (Lys-Gly) (interchain with G-Cter in SUMO1); alternate. Residue Lys-49 forms a Glycyl lysine isopeptide (Lys-Gly) (interchain with G-Cter in SUMO2); alternate linkage. N6-acetyllysine is present on Lys-152. Residue Ser-184 is modified to Phosphoserine. Annexin repeat units lie at residues 189–261 (ELID…NLVQ) and 265–336 (NKPL…YLCG). Residue Tyr-199 is modified to Phosphotyrosine. Lys-227 is modified (N6-acetyllysine).

It belongs to the annexin family. As to quaternary structure, heterotetramer containing 2 light chains of S100A10/p11 and 2 heavy chains of ANXA2/p36. Interacts with ATP1B1. Interacts with DYSF. Interacts with COCH. Interacts (via repeat Annexin 1) with PCSK9 (via the C-terminal domain); the interaction inhibits the degradation of LDLR. Interacts with CEACAM1 (via the cytoplasmic domain); this interaction is regulated by phosphorylation of CEACAM1. Interacts with APPL2 and APPL1; targets APPL2 to endosomes and acting in parallel to RAB5A. Interacts with S100A4. May interact with UBAP2. Interacts with PLEKHG4B; this interaction is required for PLEKHG4B localization to cell-cell adhesions. ISGylated.

It localises to the secreted. It is found in the extracellular space. The protein localises to the extracellular matrix. Its subcellular location is the basement membrane. In terms of biological role, calcium-regulated membrane-binding protein whose affinity for calcium is greatly enhanced by anionic phospholipids. It binds two calcium ions with high affinity. May be involved in heat-stress response. Inhibits PCSK9-enhanced LDLR degradation, probably reduces PCSK9 protein levels via a translational mechanism but also competes with LDLR for binding with PCSK9. Binds to endosomes damaged by phagocytosis of particulate wear debris and participates in endosomal membrane stabilization, thereby limiting NLRP3 inflammasome activation. Required for endothelial cell surface plasmin generation and may support fibrinolytic surveillance and neoangiogenesis. The chain is Annexin A2 (ANXA2) from Canis lupus familiaris (Dog).